The following is a 571-amino-acid chain: MRRRSRMLLCFAFLWVLGIAYYMYSGGGSALAGGAGGGAGRKEDWNEIDPIKKKDLHHSNGEEKAQSMETLPPGKVRWPDFNQEAYVGGTMVRSGQDPYARNKFNQVESDKLRMDRAIPDTRHDQCQRKQWRVDLPATSVVITFHNEARSALLRTVVSVLKKSPPHLIKEIILVDDYSNDPEDGALLGKIEKVRVLRNDRREGLMRSRVRGADAAQAKVLTFLDSHCECNEHWLEPLLERVAEDRTRVVSPIIDVINMDNFQYVGASADLKGGFDWNLVFKWDYMTPEQRRSRQGNPVAPIKTPMIAGGLFVMDKFYFEELGKYDMMMDVWGGENLEISFRVWQCGGSLEIIPCSRVGHVFRKQHPYTFPGGSGTVFARNTRRAAEVWMDEYKNFYYAAVPSARNVPYGNIQSRLELRKKLSCKPFKWYLENVYPELRVPDHQDIAFGALQQGTNCLDTLGHFADGVVGVYECHNAGGNQEWALTKEKSVKHMDLCLTVVDRAPGSLIKLQGCRENDSRQKWEQIEGNSKLRHVGSNLCLDSRTAKSGGLSVEVCGPALSQQWKFTLNLQQ.

Residues Met-1 to Arg-6 lie on the Cytoplasmic side of the membrane. Residues Met-7–Tyr-24 traverse the membrane as a helical; Signal-anchor for type II membrane protein segment. The Lumenal segment spans residues Ser-25–Gln-571. A glycan (O-linked (Xyl...) (chondroitin sulfate) serine) is linked at Ser-29. Positions Lys-53–Gln-66 are enriched in basic and acidic residues. Positions Lys-53 to Gly-74 are disordered. Cystine bridges form between Cys-126–Cys-354, Cys-345–Cys-423, Cys-456–Cys-473, and Cys-496–Cys-513. The interval Leu-135–Arg-240 is catalytic subdomain A. Residues Thr-143, Asp-176, and Arg-201 each coordinate substrate. Asp-224 provides a ligand contact to Mn(2+). Ser-225 contributes to the substrate binding site. His-226 provides a ligand contact to Mn(2+). The catalytic subdomain B stretch occupies residues Pro-300 to Arg-362. Residue Trp-331 coordinates substrate. His-359 provides a ligand contact to Mn(2+). Positions 362, 365, and 367 each coordinate substrate. The Ricin B-type lectin domain maps to Gln-443–Thr-566. Ser-536 carries the post-translational modification Phosphoserine. A disulfide bridge links Cys-539 with Cys-555.

Belongs to the glycosyltransferase 2 family. GalNAc-T subfamily. It depends on Mn(2+) as a cofactor. In terms of tissue distribution, detected in urine (at protein level). Widely expressed.

It localises to the golgi apparatus. Its subcellular location is the golgi stack membrane. The protein localises to the secreted. It catalyses the reaction L-seryl-[protein] + UDP-N-acetyl-alpha-D-galactosamine = a 3-O-[N-acetyl-alpha-D-galactosaminyl]-L-seryl-[protein] + UDP + H(+). It carries out the reaction L-threonyl-[protein] + UDP-N-acetyl-alpha-D-galactosamine = a 3-O-[N-acetyl-alpha-D-galactosaminyl]-L-threonyl-[protein] + UDP + H(+). The protein operates within protein modification; protein glycosylation. Its function is as follows. Catalyzes the initial reaction in O-linked oligosaccharide biosynthesis, the transfer of an N-acetyl-D-galactosamine residue to a serine or threonine residue on the protein receptor. Has a broad spectrum of substrates for peptides such as EA2, Muc5AC, Muc1a, Muc1b. Probably involved in O-linked glycosylation of the immunoglobulin A1 (IgA1) hinge region. Involved in O-linked glycosylation of APOC-III, ANGPTL3 and PLTP. It participates in the regulation of HDL-C metabolism. The protein is Polypeptide N-acetylgalactosaminyltransferase 2 (GALNT2) of Homo sapiens (Human).